A 357-amino-acid polypeptide reads, in one-letter code: Probable butyrate kinase 1 (357 aa).

Belongs to the acetokinase family.

It localises to the cytoplasm. It carries out the reaction butanoate + ATP = butanoyl phosphate + ADP. This is Probable butyrate kinase 1 from Caldanaerobacter subterraneus subsp. tengcongensis (strain DSM 15242 / JCM 11007 / NBRC 100824 / MB4) (Thermoanaerobacter tengcongensis).